Here is a 521-residue protein sequence, read N- to C-terminus: Cytochrome P450 monooxygenase bet2 (521 aa).

The chain crosses the membrane as a helical span at residues 23–43; sequence SNWRFALFVAATLLTSYIVIV. Residue asparagine 188 is glycosylated (N-linked (GlcNAc...) asparagine). Cysteine 461 contributes to the heme binding site.

It belongs to the cytochrome P450 family. Heme is required as a cofactor.

Its subcellular location is the membrane. It catalyses the reaction dehydroprobetaenone I + NADPH + O2 + H(+) = epoxybetaenone + NADP(+) + H2O. The enzyme catalyses dehydroprobetaenone I + 3 NADPH + 3 O2 + 3 H(+) = betaenone C + 3 NADP(+) + 3 H2O. The protein operates within mycotoxin biosynthesis. Functionally, cytochrome P450 monooxygenase; part of the gene cluster that mediates the biosynthesis of betaenones, phytotoxic polyketides involved in leaf spot disease in sugar beets. The first step of the pathway is the synthesis of dehydroprobetaenone I by the polyketide synthase bet1 and the enoyl reductase bet3 via condensation of one acetyl-CoA starter unit with 7 malonyl-CoA units and 5 methylations. The C-terminal reductase (R) domain of bet1 catalyzes the reductive release of the polyketide chain. Because bet1 lacks a designated enoylreductase (ER) domain, the required activity is provided the enoyl reductase bet3. The short-chain dehydrogenase/reductase bet4 then catalyzes reduction of dehydroprobetaenone I to probetaenone I. The cytochrome P450 monooxygenase bet2 catalyzes successive epoxidation, oxidation (resulting from epoxide opening) and hydroxylation to install a tertiary alcohol in the decaline ring to yield betaenone C from dehydroprobetaenone I and betaenone B from probetaenone I. The FAD-linked oxidoreductase (orf1) is probably responsible for the conversion of betaenone C to betaenone A via an intramolecular aldol reaction between C-1 and C-17 to form the bridged tricyclic system in betaenone A. This is Cytochrome P450 monooxygenase bet2 from Neocamarosporium betae (Beet black rot fungus).